Reading from the N-terminus, the 393-residue chain is Formate-dependent phosphoribosylglycinamide formyltransferase (393 aa).

Residues 22-23 (EL) and E82 each bind N(1)-(5-phospho-beta-D-ribosyl)glycinamide. ATP contacts are provided by residues R114, K155, 160 to 165 (SSGKGQ), 195 to 198 (EGLV), and E203. The ATP-grasp domain maps to 119–308 (RLAAETLQLP…EFALHVRAFL (190 aa)). Positions 267 and 279 each coordinate Mg(2+). N(1)-(5-phospho-beta-D-ribosyl)glycinamide contacts are provided by residues D286, K355, and 362–363 (RR).

The protein belongs to the PurK/PurT family. In terms of assembly, homodimer.

It carries out the reaction N(1)-(5-phospho-beta-D-ribosyl)glycinamide + formate + ATP = N(2)-formyl-N(1)-(5-phospho-beta-D-ribosyl)glycinamide + ADP + phosphate + H(+). It participates in purine metabolism; IMP biosynthesis via de novo pathway; N(2)-formyl-N(1)-(5-phospho-D-ribosyl)glycinamide from N(1)-(5-phospho-D-ribosyl)glycinamide (formate route): step 1/1. Its function is as follows. Involved in the de novo purine biosynthesis. Catalyzes the transfer of formate to 5-phospho-ribosyl-glycinamide (GAR), producing 5-phospho-ribosyl-N-formylglycinamide (FGAR). Formate is provided by PurU via hydrolysis of 10-formyl-tetrahydrofolate. This Yersinia pseudotuberculosis serotype O:3 (strain YPIII) protein is Formate-dependent phosphoribosylglycinamide formyltransferase.